Reading from the N-terminus, the 370-residue chain is MLSLNLSESLRIPFQNPRPPKSDFSSTSSSPSSSSRRCVSAYPIPIGFSVRNQYFSRCLTQLRRNESQQLGFRCFQRNDAACYLEKAESEEHDRNLDVLVESSIAHSRREIQRVLMFLAVSGSVALLGTDPAFAASSIPNVTQSLVTSFGDLGDISSGFASAFLLIFFSELGDKTFFIAALLAARNSAATVFVGTFGALGIMTIISVVLGRTFHYVDEVLPFRFGGTDLPIDDIAAVCLLVYFGVSTLLDAVSDEGKADEEQKEAELAVSELSGNGAGIVAAANTIISTFALVFVAEWGDKSFFSTIALAAASSPLGVIAGALAGHGAATLLAVLGGSLLGNFLSEKAIAYVGGVLFLVFAAVTVAEIVT.

The interval 1–38 (MLSLNLSESLRIPFQNPRPPKSDFSSTSSSPSSSSRRC) is disordered. Residues 1-73 (MLSLNLSESL…RNESQQLGFR (73 aa)) constitute a chloroplast transit peptide. Low complexity predominate over residues 22-38 (SDFSSTSSSPSSSSRRC). Topologically, residues 74–113 (CFQRNDAACYLEKAESEEHDRNLDVLVESSIAHSRREIQR) are stromal. Residues 114–134 (VLMFLAVSGSVALLGTDPAFA) form a helical membrane-spanning segment. Residues 135–161 (ASSIPNVTQSLVTSFGDLGDISSGFAS) lie on the Lumenal, thylakoid side of the membrane. Residues 162–182 (AFLLIFFSELGDKTFFIAALL) traverse the membrane as a helical segment. The Stromal segment spans residues 183–188 (AARNSA). The helical transmembrane segment at 189 to 209 (ATVFVGTFGALGIMTIISVVL) threads the bilayer. Topologically, residues 210–228 (GRTFHYVDEVLPFRFGGTD) are lumenal, thylakoid. The helical transmembrane segment at 229-249 (LPIDDIAAVCLLVYFGVSTLL) threads the bilayer. The Stromal portion of the chain corresponds to 250–275 (DAVSDEGKADEEQKEAELAVSELSGN). Residues 276–296 (GAGIVAAANTIISTFALVFVA) form a helical membrane-spanning segment. Residues 297–315 (EWGDKSFFSTIALAAASSP) lie on the Lumenal, thylakoid side of the membrane. The helical transmembrane segment at 316–336 (LGVIAGALAGHGAATLLAVLG) threads the bilayer. Residues 337-348 (GSLLGNFLSEKA) are Stromal-facing. Residues 349–369 (IAYVGGVLFLVFAAVTVAEIV) form a helical membrane-spanning segment. Position 370 (Thr-370) is a topological domain, lumenal, thylakoid.

Belongs to the GDT1 family. In terms of assembly, homodimer.

The protein resides in the plastid. Its subcellular location is the chloroplast membrane. It is found in the thylakoid. Functionally, mn(2+)/H(+) exchanger, which transport Mn(2+)from the chloroplast stroma into the acidic thylakoid lumen. Might be a chloroplast-localized Ca(2+)/H(+) antiporter. Regulates Ca(2+), Mn(2+) and pH homeostasis. Required for chloroplast development. The protein is Protein PAM71, chloroplastic of Arabidopsis thaliana (Mouse-ear cress).